The chain runs to 417 residues: Gamma-glutamyl phosphate reductase (417 aa).

It belongs to the gamma-glutamyl phosphate reductase family.

It localises to the cytoplasm. It carries out the reaction L-glutamate 5-semialdehyde + phosphate + NADP(+) = L-glutamyl 5-phosphate + NADPH + H(+). It participates in amino-acid biosynthesis; L-proline biosynthesis; L-glutamate 5-semialdehyde from L-glutamate: step 2/2. Catalyzes the NADPH-dependent reduction of L-glutamate 5-phosphate into L-glutamate 5-semialdehyde and phosphate. The product spontaneously undergoes cyclization to form 1-pyrroline-5-carboxylate. In Escherichia coli (strain SMS-3-5 / SECEC), this protein is Gamma-glutamyl phosphate reductase.